A 443-amino-acid chain; its full sequence is ATP-dependent protease ATPase subunit HslU (443 aa).

ATP contacts are provided by residues Ile20, 62-67, Asp255, Glu321, and Arg393; that span reads GVGKTE.

The protein belongs to the ClpX chaperone family. HslU subfamily. In terms of assembly, a double ring-shaped homohexamer of HslV is capped on each side by a ring-shaped HslU homohexamer. The assembly of the HslU/HslV complex is dependent on binding of ATP.

It is found in the cytoplasm. In terms of biological role, ATPase subunit of a proteasome-like degradation complex; this subunit has chaperone activity. The binding of ATP and its subsequent hydrolysis by HslU are essential for unfolding of protein substrates subsequently hydrolyzed by HslV. HslU recognizes the N-terminal part of its protein substrates and unfolds these before they are guided to HslV for hydrolysis. This is ATP-dependent protease ATPase subunit HslU from Helicobacter pylori (strain ATCC 700392 / 26695) (Campylobacter pylori).